The following is a 128-amino-acid chain: Orchestin (128 aa).

The first 20 residues, 1–20 (MNKVFIIGVCLFIVSQAVLA), serve as a signal peptide directing secretion. Residues 23–95 (WDSDESSDER…DEDSDDSQES (73 aa)) are disordered. 2 stretches are compositionally biased toward basic and acidic residues: residues 30–49 (DERL…KLVV) and 56–81 (EDSN…RKLS). Residues 84 to 93 (TSDEDSDDSQ) are compositionally biased toward acidic residues.

In terms of processing, phosphorylated on Ser and Tyr residues. Calcium-binding activity is dependent on serine phosphorylation but not on tyrosine phosphorylation. Posterior caeca epithelium of the gut.

The protein localises to the secreted. In terms of biological role, plays a role in cuticle calcification. May induce precipitation of the calcium stored in the posterior caeca as calcium carbonate. The sequence is that of Orchestin from Cryptorchestia cavimana (Amphipod).